The sequence spans 393 residues: 1-deoxy-D-xylulose 5-phosphate reductoisomerase (393 aa).

NADPH-binding residues include threonine 13, glycine 14, serine 15, isoleucine 16, and asparagine 128. Residue lysine 129 participates in 1-deoxy-D-xylulose 5-phosphate binding. Glutamate 130 lines the NADPH pocket. Aspartate 154 provides a ligand contact to Mn(2+). 1-deoxy-D-xylulose 5-phosphate is bound by residues serine 155, glutamate 156, serine 178, and histidine 201. Glutamate 156 contributes to the Mn(2+) binding site. Glycine 207 lines the NADPH pocket. Serine 214, asparagine 219, lysine 220, and glutamate 223 together coordinate 1-deoxy-D-xylulose 5-phosphate. Glutamate 223 contributes to the Mn(2+) binding site.

The protein belongs to the DXR family. Requires Mg(2+) as cofactor. The cofactor is Mn(2+).

It catalyses the reaction 2-C-methyl-D-erythritol 4-phosphate + NADP(+) = 1-deoxy-D-xylulose 5-phosphate + NADPH + H(+). It participates in isoprenoid biosynthesis; isopentenyl diphosphate biosynthesis via DXP pathway; isopentenyl diphosphate from 1-deoxy-D-xylulose 5-phosphate: step 1/6. Catalyzes the NADPH-dependent rearrangement and reduction of 1-deoxy-D-xylulose-5-phosphate (DXP) to 2-C-methyl-D-erythritol 4-phosphate (MEP). This Acidithiobacillus ferrooxidans (strain ATCC 23270 / DSM 14882 / CIP 104768 / NCIMB 8455) (Ferrobacillus ferrooxidans (strain ATCC 23270)) protein is 1-deoxy-D-xylulose 5-phosphate reductoisomerase.